The following is a 330-amino-acid chain: Putative protein N-methyltransferase FAM86B1 (330 aa).

Residues W139, 165–167 (GSG), W228, and A247 each bind S-adenosyl-L-methionine.

The protein belongs to the class I-like SAM-binding methyltransferase superfamily. EEF2KMT family.

In Homo sapiens (Human), this protein is Putative protein N-methyltransferase FAM86B1.